A 164-amino-acid chain; its full sequence is SsrA-binding protein (164 aa).

Residues 143–164 form a disordered region; the sequence is HDKRQDEKQKSIKKEINSVLKR. Residues 145-158 show a composition bias toward basic and acidic residues; that stretch reads KRQDEKQKSIKKEI.

Belongs to the SmpB family.

Its subcellular location is the cytoplasm. Required for rescue of stalled ribosomes mediated by trans-translation. Binds to transfer-messenger RNA (tmRNA), required for stable association of tmRNA with ribosomes. tmRNA and SmpB together mimic tRNA shape, replacing the anticodon stem-loop with SmpB. tmRNA is encoded by the ssrA gene; the 2 termini fold to resemble tRNA(Ala) and it encodes a 'tag peptide', a short internal open reading frame. During trans-translation Ala-aminoacylated tmRNA acts like a tRNA, entering the A-site of stalled ribosomes, displacing the stalled mRNA. The ribosome then switches to translate the ORF on the tmRNA; the nascent peptide is terminated with the 'tag peptide' encoded by the tmRNA and targeted for degradation. The ribosome is freed to recommence translation, which seems to be the essential function of trans-translation. This is SsrA-binding protein from Prochlorococcus marinus (strain MIT 9312).